We begin with the raw amino-acid sequence, 336 residues long: Tryptophan--tRNA ligase (336 aa).

ATP contacts are provided by residues 9 to 11 and 17 to 18; these read QPS and GN. The 'HIGH' region motif lies at 10–18; that stretch reads PSGTPTIGN. Asp134 provides a ligand contact to L-tryptophan. ATP is bound by residues 146-148, Ile189, and 198-202; these read GDD and KMSKS. Positions 198-202 match the 'KMSKS' region motif; it reads KMSKS.

The protein belongs to the class-I aminoacyl-tRNA synthetase family. In terms of assembly, homodimer.

It localises to the cytoplasm. The catalysed reaction is tRNA(Trp) + L-tryptophan + ATP = L-tryptophyl-tRNA(Trp) + AMP + diphosphate + H(+). In terms of biological role, catalyzes the attachment of tryptophan to tRNA(Trp). The polypeptide is Tryptophan--tRNA ligase (Enterococcus faecalis (strain ATCC 700802 / V583)).